The chain runs to 698 residues: MHEEFPTETPAVVTCGLPYANGDLHVGHLRTYVSGDAYARALESLGQSVAFVSGSDMHGTPIAVNAAEEGVDPESFAVEYHEQYEETFPQFNIEFDNYGHTHDETNTEMTRSFVRSWIDDDHVVEKEIEVAWDAEADQPLPDRFVEGTCPYCGEKARGDECDEGCQRHLEPGEIEAPVSTITGNPAEYRTRPHKFLRLSDFQEYLRGFIDRLEGTENAQNQPREWIEGELQDLCITRDMDWGIDYPADGDESGEDLVLYVWVDAPIEYVSSTKQYSEQVGRDEYDWEAVWKNQVDGVPPEGGEIVHIIGHDIIQHHTVFWPAMLRGAGFNEPRAVMACGFVNLDGDAFSTSRNRAVWADDYIESGLHPDLYRYHIITGSEFTADVDFSWDGLQERTNSELVGTLGNFLYRSLLFAERNYGGTPDAAVSDEVRNEIEAAMADFRTAVNDYRVRGLGRAPVELATFGNEYIQRHEPWKLTDDDPEKARQVIRDCVQIAKAIAVLAEPVLPGKAAALWDQLGEDGSVHDAELGAALESPPEAFDEPDELFEKLEDDRIEELNRQLEERIEAADAGDEEGEDEDEEPPAADLEPVADERISFGDFQDLDIRVAEVLEAEPIEGADDLAKLAVDIGVETRQIVAGIKQLHDLDSLSGTRIVVVANLEKAELFGVESNGMLLAAGEQADLLTTLEDAEPGTKVQ.

Residues 18 to 28 (PYANGDLHVGH) carry the 'HIGH' region motif. Zn(2+) contacts are provided by C149, C152, C161, and C165. T350 is a binding site for ATP. The disordered stretch occupies residues 567–590 (EAADAGDEEGEDEDEEPPAADLEP). A compositionally biased stretch (acidic residues) spans 570–584 (DAGDEEGEDEDEEPP). The tRNA-binding domain occupies 600-698 (DFQDLDIRVA…EDAEPGTKVQ (99 aa)).

Belongs to the class-I aminoacyl-tRNA synthetase family. MetG type 1 subfamily. Homodimer. The cofactor is Zn(2+).

It is found in the cytoplasm. It catalyses the reaction tRNA(Met) + L-methionine + ATP = L-methionyl-tRNA(Met) + AMP + diphosphate. Functionally, is required not only for elongation of protein synthesis but also for the initiation of all mRNA translation through initiator tRNA(fMet) aminoacylation. The chain is Methionine--tRNA ligase from Natronomonas pharaonis (strain ATCC 35678 / DSM 2160 / CIP 103997 / JCM 8858 / NBRC 14720 / NCIMB 2260 / Gabara) (Halobacterium pharaonis).